The chain runs to 320 residues: MSKGSSKHTVRINQTWYIVSFILGLSLFAGVLLSTIYYVLSPIQEQAATFDRNKQMLLAAHILDFKGRFQIQEKKEWVPATFDKKTQLLEVATKKVSEVSYPELELYAERFVRPLLTDAQGKVFSFEEKNLNPIEFFEKYQESPPCQQSPLPFYVILENTSRTENMSGADVAKDLSTVQALIFPISGFGLWGPIHGYLGVKNDGDTVLGTAWYQQGETPGLGANITNPEWQEQFYGKKIFLQDSSGTTNFATTDLGLEVVKGSVRTTLGDSPKALSAIDGISGATLTCNGVTEAYVQSLACYRQLLINFSNLTHEKKTGE.

A helical membrane pass occupies residues 16–36 (WYIVSFILGLSLFAGVLLSTI). At T285 the chain carries FMN phosphoryl threonine.

The protein belongs to the NqrC family. As to quaternary structure, composed of six subunits; NqrA, NqrB, NqrC, NqrD, NqrE and NqrF. The cofactor is FMN.

It localises to the cell inner membrane. The catalysed reaction is a ubiquinone + n Na(+)(in) + NADH + H(+) = a ubiquinol + n Na(+)(out) + NAD(+). NQR complex catalyzes the reduction of ubiquinone-1 to ubiquinol by two successive reactions, coupled with the transport of Na(+) ions from the cytoplasm to the periplasm. NqrA to NqrE are probably involved in the second step, the conversion of ubisemiquinone to ubiquinol. The polypeptide is Na(+)-translocating NADH-quinone reductase subunit C (Chlamydia pneumoniae (Chlamydophila pneumoniae)).